The following is a 679-amino-acid chain: Transketolase (679 aa).

H30 contributes to the substrate binding site. Residues H69 and 116–118 (GPL) contribute to the thiamine diphosphate site. Residue D157 participates in Mg(2+) binding. Thiamine diphosphate-binding residues include G158 and N187. 2 residues coordinate Mg(2+): N187 and I189. Substrate is bound by residues H262, R358, and S385. H262 serves as a coordination point for thiamine diphosphate. Thiamine diphosphate is bound by residues E417 and F444. E417 serves as the catalytic Proton donor. Positions 468, 476, and 527 each coordinate substrate.

The protein belongs to the transketolase family. Homodimer. Mg(2+) is required as a cofactor. The cofactor is Ca(2+). Requires Mn(2+) as cofactor. Co(2+) serves as cofactor. It depends on thiamine diphosphate as a cofactor.

It carries out the reaction D-sedoheptulose 7-phosphate + D-glyceraldehyde 3-phosphate = aldehydo-D-ribose 5-phosphate + D-xylulose 5-phosphate. Its function is as follows. Catalyzes the transfer of a two-carbon ketol group from a ketose donor to an aldose acceptor, via a covalent intermediate with the cofactor thiamine pyrophosphate. The protein is Transketolase (TKL1) of Kluyveromyces lactis (strain ATCC 8585 / CBS 2359 / DSM 70799 / NBRC 1267 / NRRL Y-1140 / WM37) (Yeast).